We begin with the raw amino-acid sequence, 214 residues long: Uracil phosphoribosyltransferase (214 aa).

5-phospho-alpha-D-ribose 1-diphosphate is bound by residues Arg81, Arg106, and 133-141; that span reads DPMLATGNS. Uracil contacts are provided by residues Ile196 and 201–203; that span reads GDA. A 5-phospho-alpha-D-ribose 1-diphosphate-binding site is contributed by Asp202.

The protein belongs to the UPRTase family. Mg(2+) is required as a cofactor.

The catalysed reaction is UMP + diphosphate = 5-phospho-alpha-D-ribose 1-diphosphate + uracil. The protein operates within pyrimidine metabolism; UMP biosynthesis via salvage pathway; UMP from uracil: step 1/1. Allosterically activated by GTP. Functionally, catalyzes the conversion of uracil and 5-phospho-alpha-D-ribose 1-diphosphate (PRPP) to UMP and diphosphate. The chain is Uracil phosphoribosyltransferase from Legionella pneumophila subsp. pneumophila (strain Philadelphia 1 / ATCC 33152 / DSM 7513).